The primary structure comprises 351 residues: UDP-3-O-acylglucosamine N-acyltransferase (351 aa).

The active-site Proton acceptor is the histidine 257.

The protein belongs to the transferase hexapeptide repeat family. LpxD subfamily. Homotrimer.

It catalyses the reaction a UDP-3-O-[(3R)-3-hydroxyacyl]-alpha-D-glucosamine + a (3R)-hydroxyacyl-[ACP] = a UDP-2-N,3-O-bis[(3R)-3-hydroxyacyl]-alpha-D-glucosamine + holo-[ACP] + H(+). It participates in bacterial outer membrane biogenesis; LPS lipid A biosynthesis. Its function is as follows. Catalyzes the N-acylation of UDP-3-O-acylglucosamine using 3-hydroxyacyl-ACP as the acyl donor. Is involved in the biosynthesis of lipid A, a phosphorylated glycolipid that anchors the lipopolysaccharide to the outer membrane of the cell. This is UDP-3-O-acylglucosamine N-acyltransferase from Methylorubrum populi (strain ATCC BAA-705 / NCIMB 13946 / BJ001) (Methylobacterium populi).